The primary structure comprises 404 residues: MNQILPNSFRSGPDERGHFGIFGGRFVAETLMPLILALEKAYAEAKDDPAFRAEMDGYLKHYVGRPSPLYFAERLTEHFGGAKIYFKREDLNHTGAHKVNNVLGQIMLARRMGKPRIIAETGAGMHGVATATMCAKFGLQCVVYMGAVDVDRQQPNVLRMKALGAEVRPVTSGAATLKDAMNEALRDWVTNVHDTFYCIGTVAGPHPYPMMVRDFQAVIGQEVRAQIMEAEGRLPDSLIACIGGGSNAMGLFHPFLDDSSVAIYGVEAAGHGLSKLHAASIAGGKPGVLHGNRTYLLMDTDGQIQEAHSISAGLDYPGIGPEHAWLHDVGRVEFMSATDTEALDAFKLCCRLEGIIPALEPAHALAKVGDLAPPLPKDHVMVLNMSGRGDKDLASVAEHLGGQF.

K98 is subject to N6-(pyridoxal phosphate)lysine.

Belongs to the TrpB family. Tetramer of two alpha and two beta chains. The cofactor is pyridoxal 5'-phosphate.

It catalyses the reaction (1S,2R)-1-C-(indol-3-yl)glycerol 3-phosphate + L-serine = D-glyceraldehyde 3-phosphate + L-tryptophan + H2O. It participates in amino-acid biosynthesis; L-tryptophan biosynthesis; L-tryptophan from chorismate: step 5/5. In terms of biological role, the beta subunit is responsible for the synthesis of L-tryptophan from indole and L-serine. The protein is Tryptophan synthase beta chain of Rhodopseudomonas palustris (strain HaA2).